We begin with the raw amino-acid sequence, 160 residues long: uncharacterized protein (160 aa).

In terms of domain architecture, HTH marR-type spans 20 to 152 (EREIWVLYMK…VYEGLSILSR (133 aa)). The H-T-H motif DNA-binding region spans 66-89 (VSDIAEKMGASLSNTTGLLDRLEK).

This is an uncharacterized protein from Bacillus subtilis (strain 168).